Reading from the N-terminus, the 296-residue chain is NAD kinase (296 aa).

Asp-73 acts as the Proton acceptor in catalysis. Residues 73-74 (DG), Lys-78, 151-152 (NE), Arg-178, Asp-180, and 191-196 (TAHAMS) each bind NAD(+).

The protein belongs to the NAD kinase family. It depends on a divalent metal cation as a cofactor.

It localises to the cytoplasm. The enzyme catalyses NAD(+) + ATP = ADP + NADP(+) + H(+). Functionally, involved in the regulation of the intracellular balance of NAD and NADP, and is a key enzyme in the biosynthesis of NADP. Catalyzes specifically the phosphorylation on 2'-hydroxyl of the adenosine moiety of NAD to yield NADP. In Francisella tularensis subsp. novicida (strain U112), this protein is NAD kinase.